The primary structure comprises 357 residues: tRNA N6-adenosine threonylcarbamoyltransferase (357 aa).

Fe cation-binding residues include H115 and H119. Residues 137–141 (LASGG), D170, G183, and N281 contribute to the substrate site. D309 is a binding site for Fe cation.

This sequence belongs to the KAE1 / TsaD family. Requires Fe(2+) as cofactor.

The protein resides in the cytoplasm. The enzyme catalyses L-threonylcarbamoyladenylate + adenosine(37) in tRNA = N(6)-L-threonylcarbamoyladenosine(37) in tRNA + AMP + H(+). Its function is as follows. Required for the formation of a threonylcarbamoyl group on adenosine at position 37 (t(6)A37) in tRNAs that read codons beginning with adenine. Is involved in the transfer of the threonylcarbamoyl moiety of threonylcarbamoyl-AMP (TC-AMP) to the N6 group of A37, together with TsaE and TsaB. TsaD likely plays a direct catalytic role in this reaction. The chain is tRNA N6-adenosine threonylcarbamoyltransferase from Bradyrhizobium diazoefficiens (strain JCM 10833 / BCRC 13528 / IAM 13628 / NBRC 14792 / USDA 110).